Reading from the N-terminus, the 343-residue chain is Holliday junction branch migration complex subunit RuvB (343 aa).

A large ATPase domain (RuvB-L) region spans residues 1–185; sequence MMNENLDATG…FGISSRLQYY (185 aa). Residues leucine 24, arginine 25, glycine 66, lysine 69, threonine 70, threonine 71, 132 to 134, arginine 175, tyrosine 185, and arginine 222 contribute to the ATP site; that span reads EDY. A Mg(2+)-binding site is contributed by threonine 70. The tract at residues 186-256 is small ATPAse domain (RuvB-S); it reads STELLSGIVE…IAKFGLKALN (71 aa). The segment at 259-343 is head domain (RuvB-H); that stretch reads AHGLDEMDNK…GSNQGGLFDN (85 aa). The DNA site is built by arginine 314 and arginine 319.

The protein belongs to the RuvB family. As to quaternary structure, homohexamer. Forms an RuvA(8)-RuvB(12)-Holliday junction (HJ) complex. HJ DNA is sandwiched between 2 RuvA tetramers; dsDNA enters through RuvA and exits via RuvB. An RuvB hexamer assembles on each DNA strand where it exits the tetramer. Each RuvB hexamer is contacted by two RuvA subunits (via domain III) on 2 adjacent RuvB subunits; this complex drives branch migration. In the full resolvosome a probable DNA-RuvA(4)-RuvB(12)-RuvC(2) complex forms which resolves the HJ.

Its subcellular location is the cytoplasm. It carries out the reaction ATP + H2O = ADP + phosphate + H(+). Its function is as follows. The RuvA-RuvB-RuvC complex processes Holliday junction (HJ) DNA during genetic recombination and DNA repair, while the RuvA-RuvB complex plays an important role in the rescue of blocked DNA replication forks via replication fork reversal (RFR). RuvA specifically binds to HJ cruciform DNA, conferring on it an open structure. The RuvB hexamer acts as an ATP-dependent pump, pulling dsDNA into and through the RuvAB complex. RuvB forms 2 homohexamers on either side of HJ DNA bound by 1 or 2 RuvA tetramers; 4 subunits per hexamer contact DNA at a time. Coordinated motions by a converter formed by DNA-disengaged RuvB subunits stimulates ATP hydrolysis and nucleotide exchange. Immobilization of the converter enables RuvB to convert the ATP-contained energy into a lever motion, pulling 2 nucleotides of DNA out of the RuvA tetramer per ATP hydrolyzed, thus driving DNA branch migration. The RuvB motors rotate together with the DNA substrate, which together with the progressing nucleotide cycle form the mechanistic basis for DNA recombination by continuous HJ branch migration. Branch migration allows RuvC to scan DNA until it finds its consensus sequence, where it cleaves and resolves cruciform DNA. The chain is Holliday junction branch migration complex subunit RuvB from Christiangramia forsetii (strain DSM 17595 / CGMCC 1.15422 / KT0803) (Gramella forsetii).